The following is a 463-amino-acid chain: Siroheme synthase (463 aa).

A precorrin-2 dehydrogenase /sirohydrochlorin ferrochelatase region spans residues 1–203; the sequence is MDYLPLFHKL…GQGAEAERLL (203 aa). Residues 22-23 and 43-44 each bind NAD(+); these read EI and PD. Ser128 carries the phosphoserine modification. The uroporphyrinogen-III C-methyltransferase stretch occupies residues 216-463; sequence GEVYLVGAGP…LAWFEGSQNS (248 aa). An S-adenosyl-L-methionine-binding site is contributed by Pro225. The active-site Proton acceptor is Asp248. The Proton donor role is filled by Lys270. S-adenosyl-L-methionine contacts are provided by residues 301–303, Ile306, 331–332, Met383, and Gly412; these read GGD and TA.

This sequence in the N-terminal section; belongs to the precorrin-2 dehydrogenase / sirohydrochlorin ferrochelatase family. It in the C-terminal section; belongs to the precorrin methyltransferase family.

It catalyses the reaction uroporphyrinogen III + 2 S-adenosyl-L-methionine = precorrin-2 + 2 S-adenosyl-L-homocysteine + H(+). The catalysed reaction is precorrin-2 + NAD(+) = sirohydrochlorin + NADH + 2 H(+). It carries out the reaction siroheme + 2 H(+) = sirohydrochlorin + Fe(2+). It functions in the pathway cofactor biosynthesis; adenosylcobalamin biosynthesis; precorrin-2 from uroporphyrinogen III: step 1/1. Its pathway is cofactor biosynthesis; adenosylcobalamin biosynthesis; sirohydrochlorin from precorrin-2: step 1/1. The protein operates within porphyrin-containing compound metabolism; siroheme biosynthesis; precorrin-2 from uroporphyrinogen III: step 1/1. It participates in porphyrin-containing compound metabolism; siroheme biosynthesis; siroheme from sirohydrochlorin: step 1/1. It functions in the pathway porphyrin-containing compound metabolism; siroheme biosynthesis; sirohydrochlorin from precorrin-2: step 1/1. Its function is as follows. Multifunctional enzyme that catalyzes the SAM-dependent methylations of uroporphyrinogen III at position C-2 and C-7 to form precorrin-2 via precorrin-1. Then it catalyzes the NAD-dependent ring dehydrogenation of precorrin-2 to yield sirohydrochlorin. Finally, it catalyzes the ferrochelation of sirohydrochlorin to yield siroheme. This is Siroheme synthase from Pseudomonas putida (strain ATCC 700007 / DSM 6899 / JCM 31910 / BCRC 17059 / LMG 24140 / F1).